We begin with the raw amino-acid sequence, 112 residues long: Large ribosomal subunit protein uL22 (112 aa).

It belongs to the universal ribosomal protein uL22 family. In terms of assembly, part of the 50S ribosomal subunit.

In terms of biological role, this protein binds specifically to 23S rRNA; its binding is stimulated by other ribosomal proteins, e.g. L4, L17, and L20. It is important during the early stages of 50S assembly. It makes multiple contacts with different domains of the 23S rRNA in the assembled 50S subunit and ribosome. Functionally, the globular domain of the protein is located near the polypeptide exit tunnel on the outside of the subunit, while an extended beta-hairpin is found that lines the wall of the exit tunnel in the center of the 70S ribosome. In Moorella thermoacetica (strain ATCC 39073 / JCM 9320), this protein is Large ribosomal subunit protein uL22.